We begin with the raw amino-acid sequence, 510 residues long: Glycerol kinase (510 aa).

Position 13 (Thr-13) interacts with ADP. ATP-binding residues include Thr-13 and Thr-14. Thr-13 lines the sn-glycerol 3-phosphate pocket. Arg-17 lines the ADP pocket. Residues Arg-83, Glu-84, Tyr-135, and Asp-255 each coordinate sn-glycerol 3-phosphate. 5 residues coordinate glycerol: Arg-83, Glu-84, Tyr-135, Asp-255, and Gln-256. Thr-277, Gly-321, Gly-421, and Asn-425 together coordinate ADP. Residues Thr-277, Gly-321, and Gly-421 each contribute to the ATP site.

Belongs to the FGGY kinase family.

The enzyme catalyses glycerol + ATP = sn-glycerol 3-phosphate + ADP + H(+). The protein operates within polyol metabolism; glycerol degradation via glycerol kinase pathway; sn-glycerol 3-phosphate from glycerol: step 1/1. In terms of biological role, key enzyme in the regulation of glycerol uptake and metabolism. Catalyzes the phosphorylation of glycerol to yield sn-glycerol 3-phosphate. In Haloarcula marismortui (strain ATCC 43049 / DSM 3752 / JCM 8966 / VKM B-1809) (Halobacterium marismortui), this protein is Glycerol kinase.